Here is a 396-residue protein sequence, read N- to C-terminus: Decapping nuclease RAI1 (396 aa).

107–109 (YRG) is a binding site for substrate. Glu-179 contributes to the a divalent metal cation binding site. Glu-228 is a binding site for substrate. The a divalent metal cation site is built by Asp-230, Glu-249, and Leu-250. Substrate contacts are provided by Lys-251 and Gln-275.

Belongs to the DXO/Dom3Z family. In terms of assembly, interacts with RAT1; the interaction is direct, stabilizes RAT1 protein structure and stimulates its exoribonuclease activity. The interaction also stimulates RAI1 pyrophosphohydrolase activity, probably by recruiting it to mRNA substrates. A divalent metal cation is required as a cofactor.

Its subcellular location is the nucleus. It catalyses the reaction a 5'-end NAD(+)-phospho-ribonucleoside in mRNA + H2O = a 5'-end phospho-ribonucleoside in mRNA + NAD(+) + H(+). The catalysed reaction is a 5'-end (N(7)-methyl 5'-triphosphoguanosine)-ribonucleoside-ribonucleotide in mRNA + H2O = a (N(7)-methyl 5'-triphosphoguanosine)-nucleoside + a 5'-end phospho-ribonucleoside in mRNA + H(+). The enzyme catalyses a 5'-end triphospho-ribonucleoside in mRNA + H2O = a 5'-end phospho-ribonucleoside in mRNA + diphosphate + H(+). Functionally, decapping enzyme for NAD-capped RNAs: specifically hydrolyzes the nicotinamide adenine dinucleotide (NAD) cap from a subset of RNAs by removing the entire NAD moiety from the 5'-end of an NAD-capped RNA. The NAD-cap is present at the 5'-end of some RNAs and snoRNAs. In contrast to the canonical 5'-end N7 methylguanosine (m7G) cap, the NAD cap promotes mRNA decay. Also acts as a non-canonical decapping enzyme that removes the entire cap structure of m7G capped or incompletely capped RNAs. Has decapping activity toward incomplete 5'-end m7G cap mRNAs such as unmethylated 5'-end-capped RNA (cap0), while it has no activity toward 2'-O-ribose methylated m7G cap (cap1). Also possesses RNA 5'-pyrophosphohydrolase activity by hydrolyzing the 5'-end triphosphate to release pyrophosphates. Stimulates exoribonuclease activity of Rat1, allowing it to degrade RNAs with stable secondary structure more effectively. This is Decapping nuclease RAI1 from Scheffersomyces stipitis (strain ATCC 58785 / CBS 6054 / NBRC 10063 / NRRL Y-11545) (Yeast).